A 255-amino-acid polypeptide reads, in one-letter code: Ribonuclease HII (255 aa).

In terms of domain architecture, RNase H type-2 spans 72–255 (RLIAGVDEVG…KTFAPVQSFR (184 aa)). A divalent metal cation-binding residues include aspartate 78, glutamate 79, and aspartate 170.

It belongs to the RNase HII family. Mn(2+) serves as cofactor. Requires Mg(2+) as cofactor.

It is found in the cytoplasm. The catalysed reaction is Endonucleolytic cleavage to 5'-phosphomonoester.. In terms of biological role, endonuclease that specifically degrades the RNA of RNA-DNA hybrids. The sequence is that of Ribonuclease HII (rnhB) from Bacillus subtilis (strain 168).